A 492-amino-acid chain; its full sequence is Serine/threonine-protein kinase 3 (492 aa).

The 252-residue stretch at 26–277 (FDVLEKLGEG…ATQLLQHPFI (252 aa)) folds into the Protein kinase domain. ATP contacts are provided by residues 32-40 (LGEGSYGSV) and Lys-55. Asp-145 serves as the catalytic Proton acceptor. Thr-179 is subject to Phosphothreonine; by autocatalysis. Coiled coils occupy residues 286-328 (LRDL…TMVK) and 443-476 (NLDF…AKRQ). A compositionally biased stretch (basic and acidic residues) spans 297-307 (KAKRQQEQQRE). The tract at residues 297–339 (KAKRQQEQQRELEEDDENSEEEVEVDSHTMVKSGSESAGTMRA) is disordered. The segment covering 308–320 (LEEDDENSEEEVE) has biased composition (acidic residues). Residues 326-339 (MVKSGSESAGTMRA) are compositionally biased toward polar residues. In terms of domain architecture, SARAH spans 438 to 485 (FDFLKNLDFEELQMRLTALDPMMEREIEELRQRYTAKRQPILDAMDAK).

This sequence belongs to the protein kinase superfamily. STE Ser/Thr protein kinase family. STE20 subfamily. Homodimer; mediated via the coiled-coil region. It depends on Mg(2+) as a cofactor.

The protein localises to the cytoplasm. Its subcellular location is the nucleus. The enzyme catalyses L-seryl-[protein] + ATP = O-phospho-L-seryl-[protein] + ADP + H(+). It catalyses the reaction L-threonyl-[protein] + ATP = O-phospho-L-threonyl-[protein] + ADP + H(+). With respect to regulation, inhibited by the C-terminal non-catalytic region. Activated by caspase-cleavage. Full activation also requires homodimerization and autophosphorylation of Thr-179. Functionally, stress-activated, pro-apoptotic kinase which, following caspase-cleavage, enters the nucleus and induces chromatin condensation followed by internucleosomal DNA fragmentation. Key component of the Hippo signaling pathway which plays a pivotal role in organ size control and tumor suppression by restricting proliferation and promoting apoptosis. The core of this pathway is composed of a kinase cascade wherein stk3/mst2 and stk4/mst1, in complex with its regulatory protein sav1, phosphorylates and activates lats1/2 in complex with its regulatory protein mob1, which in turn phosphorylates and inactivates yap1 oncoprotein and wwtr1/taz. Phosphorylation of yap1 by lats2 inhibits its translocation into the nucleus to regulate cellular genes important for cell proliferation, cell death, and cell migration. This Danio rerio (Zebrafish) protein is Serine/threonine-protein kinase 3 (stk3).